The following is a 1836-amino-acid chain: Druantia protein DruE (1836 aa).

Positions 108 to 405 constitute a Helicase ATP-binding domain; it reads SFLGEDASDL…FAQDLTGLSP (298 aa). 121-128 is an ATP binding site; sequence TGTGSGKT. A DEAH box motif is present at residues 347 to 350; that stretch reads DEAH. The 186-residue stretch at 1014 to 1199 folds into the Helicase C-terminal domain; sequence DCTALMPFAL…EVKVNNPKIA (186 aa).

It localises to the cytoplasm. Component of antiviral defense system Druantia type I, composed of DruA, DruB, DruC, DruD and DruE. Expression of Druantia in E.coli (strain MG1655) confers resistance to phage lambda, SECphi18, SECphi27 and T4. This protein is probably a helicase. In Escherichia coli (strain UMEA 4076-1), this protein is Druantia protein DruE.